The following is a 1373-amino-acid chain: Inactive tyrosine-protein kinase PRAG1 (1373 aa).

Disordered regions lie at residues 31–50 (AGHP…LPAR) and 197–235 (TSSC…DSEG). Residue tyrosine 238 is modified to Phosphotyrosine. Basic and acidic residues-rich tracts occupy residues 250-263 (DAVH…RRGG) and 272-284 (QGPR…EEKQ). The segment at 250–338 (DAVHSTEGSG…SGASSPFAPH (89 aa)) is disordered. The span at 317-333 (SSSDGLSCGSSRSGASS) shows a compositional bias: low complexity. Phosphotyrosine is present on residues tyrosine 343 and tyrosine 391. Disordered stretches follow at residues 376–448 (QPAS…NPAP) and 468–794 (IYLS…LPQK). Over residues 419–438 (SQGQVWTGDTWIQKTPPSWS) the composition is skewed to polar residues. A compositionally biased stretch (basic and acidic residues) spans 506-522 (RESHPHNVTENTAKEKP). Low complexity predominate over residues 526 to 538 (PKLSKSSPGGSPV). 2 stretches are compositionally biased toward polar residues: residues 568–578 (NLTSSCHTNGV) and 655–670 (TSGQ…SKSA). A phosphoserine mark is found at serine 671 and serine 720. Composition is skewed to polar residues over residues 711 to 721 (VSQSSAESLSP) and 729 to 740 (SFTTGSTDSLAS). 2 positions are modified to phosphoserine: serine 757 and serine 802. The interval 804–823 (PDGFFWTQGSPKPRTASPKL) is disordered. The required for homodimerization stretch occupies residues 911–954 (STQLQLHSLLSSISSKEGTYAKLGGLYTQSLARLVTKCEDLFMG). One can recognise a Protein kinase domain in the interval 945 to 1296 (VTKCEDLFMG…EAKRVLQCLL (352 aa)). Positions 1041–1050 (LASPDTSSKD) are enriched in polar residues. Disordered regions lie at residues 1041 to 1062 (LASP…PPAQ) and 1138 to 1171 (QSSP…QGGP). Residues 1139–1167 (SSPGPSATPTVPTTTSRCPSAAPAATTAC) are compositionally biased toward low complexity. Residues 1298-1373 (GPRRELVEQP…LQSLKLLQLL (76 aa)) are required for homodimerization.

Belongs to the protein kinase superfamily. In terms of assembly, homodimer. Dimerization leads to the catalytic activation of CSK. Interacts (via C-terminus) with RND2. Interacts with CSK (via SH2 domain) in a Tyr-391 phosphorylation-dependent manner; this interaction potentiates kinase activity of CSK. Interacts with NOTCH1 intracellular domain (N1ICD). Forms a complex with PRAG1, N1ICD and MAML1, in a MAML1-dependent manner. Phosphorylated by CSK on Tyr-238, Tyr-343, and Tyr-391; Tyr-391 is a primary site of phosphorylation.

It localises to the cytoplasm. The protein resides in the nucleus. The protein localises to the cell junction. Its subcellular location is the focal adhesion. Catalytically inactive protein kinase that acts as a scaffold protein. Functions as an effector of the small GTPase RND2, which stimulates RhoA activity and inhibits NGF-induced neurite outgrowth. Promotes Src family kinase (SFK) signaling by regulating the subcellular localization of CSK, a negative regulator of these kinases, leading to the regulation of cell morphology and motility by a CSK-dependent mechanism. Acts as a critical coactivator of Notch signaling. The polypeptide is Inactive tyrosine-protein kinase PRAG1 (Mus musculus (Mouse)).